The following is a 409-amino-acid chain: Phosphatidylserine decarboxylase proenzyme, mitochondrial (409 aa).

The N-terminal 52 residues, 1–52 (MATSVGHRCLGLLHGVAPWRSSLHPCEITALSQSLQPLRKLPFRAFRTDARK), are a transit peptide targeting the mitochondrion. The tract at residues 36–103 (QPLRKLPFRA…LGLEIPPKLA (68 aa)) is necessary for localization to both lipid droplets and mitochondria. The Mitochondrial matrix portion of the chain corresponds to 53 to 63 (IHTAPARTMFL). A helical transmembrane segment spans residues 64-82 (LRPLPILLVTGGGYAGYRQ). The Mitochondrial intermembrane segment spans residues 83–409 (YEKYRERELE…IRFGEALGSL (327 aa)). Catalysis depends on charge relay system; for autoendoproteolytic cleavage activity residues Asp191, His267, and Ser378. The Schiff-base intermediate with substrate; via pyruvic acid; for decarboxylase activity role is filled by Ser378. A Pyruvic acid (Ser); by autocatalysis modification is found at Ser378.

The protein belongs to the phosphatidylserine decarboxylase family. PSD-B subfamily. Eukaryotic type I sub-subfamily. Heterodimer of a large membrane-associated beta subunit and a small pyruvoyl-containing alpha subunit. It depends on pyruvate as a cofactor. Post-translationally, is synthesized initially as an inactive proenzyme. Formation of the active enzyme involves a self-maturation process in which the active site pyruvoyl group is generated from an internal serine residue via an autocatalytic post-translational modification. Two non-identical subunits are generated from the proenzyme in this reaction, and the pyruvate is formed at the N-terminus of the alpha chain, which is derived from the carboxyl end of the proenzyme. The autoendoproteolytic cleavage occurs by a canonical serine protease mechanism, in which the side chain hydroxyl group of the serine supplies its oxygen atom to form the C-terminus of the beta chain, while the remainder of the serine residue undergoes an oxidative deamination to produce ammonia and the pyruvoyl prosthetic group on the alpha chain. During this reaction, the Ser that is part of the protease active site of the proenzyme becomes the pyruvoyl prosthetic group, which constitutes an essential element of the active site of the mature decarboxylase.

The protein localises to the mitochondrion inner membrane. Its subcellular location is the cytoplasm. It localises to the lipid droplet. The catalysed reaction is a 1,2-diacyl-sn-glycero-3-phospho-L-serine + H(+) = a 1,2-diacyl-sn-glycero-3-phosphoethanolamine + CO2. The protein operates within phospholipid metabolism; phosphatidylethanolamine biosynthesis. Functionally, catalyzes the formation of phosphatidylethanolamine (PtdEtn) from phosphatidylserine (PtdSer). Plays a central role in phospholipid metabolism and in the interorganelle trafficking of phosphatidylserine. May be involved in lipid droplet biogenesis at the endoplasmic reticulum membrane. The chain is Phosphatidylserine decarboxylase proenzyme, mitochondrial from Homo sapiens (Human).